Reading from the N-terminus, the 685-residue chain is Acetate--CoA ligase [ADP-forming] I (685 aa).

Positions 477-513 (LPVLEAYGIEVAPYGIARNVDEARDIAESIGYPVVLK) constitute an ATP-grasp domain. Residue 503–514 (AESIGYPVVLKV) participates in ATP binding.

It in the N-terminal section; belongs to the acetate CoA ligase alpha subunit family. This sequence in the C-terminal section; belongs to the acetate CoA ligase beta subunit family. In terms of assembly, homodimer.

The enzyme catalyses acetate + ATP + CoA = acetyl-CoA + ADP + phosphate. Activity requires divalent metal cations. Catalyzes the reversible formation of acetate and ATP from acetyl-CoA by using ADP and phosphate. Can use other substrates such as propionyl-CoA and butyryl-CoA, but not phenylacetyl-CoA. Seems to be involved primarily in the conversion of acetyl-CoA to acetate. Participates in the degradation of branched-chain amino acids via branched-chain-acyl-CoA esters. The sequence is that of Acetate--CoA ligase [ADP-forming] I from Archaeoglobus fulgidus (strain ATCC 49558 / DSM 4304 / JCM 9628 / NBRC 100126 / VC-16).